Consider the following 1784-residue polypeptide: Protein mel-28 (1784 aa).

Residues Met-1–Val-956 are required for nuclear envelope and kinetochore localization. The segment at Gly-566–Glu-778 is required for association with mitotic chromosomes. The segment at Ala-846–Gly-1071 is important for nuclear localization. Disordered regions lie at residues Lys-945–Ile-994 and Glu-1115–Gln-1784. The span at Gly-1126 to Glu-1149 shows a compositional bias: basic and acidic residues. Acidic residues-rich tracts occupy residues Leu-1222–Trp-1232 and Val-1266–Gln-1278. The tract at residues Phe-1239–Leu-1601 is chromatin binding. Residues Gln-1279–Glu-1293 show a composition bias toward basic and acidic residues. Positions Glu-1297–Glu-1306 are enriched in low complexity. The segment covering Glu-1321–Thr-1336 has biased composition (acidic residues). A compositionally biased stretch (basic and acidic residues) spans Ala-1337–Pro-1351. Polar residues predominate over residues Ser-1352–Gln-1366. The segment covering Val-1367–Pro-1382 has biased composition (basic and acidic residues). Over residues Ser-1383–Glu-1398 the composition is skewed to polar residues. Positions Lys-1428 to Pro-1444 are enriched in basic and acidic residues. The span at Ser-1445–Ala-1459 shows a compositional bias: polar residues. The span at Ala-1533 to Thr-1546 shows a compositional bias: low complexity. Over residues Val-1566–Glu-1576 the composition is skewed to acidic residues. Residues Ser-1581 to Arg-1606 show a composition bias toward polar residues. Residues Leu-1601–Gln-1784 form an important for nuclear localization region. The a.T hook 1 DNA-binding region spans Thr-1630–Gly-1642. Residues Thr-1630–Gln-1784 form a required for chromosome segregation, nuclear growth, nucleoplasmic accumulation and cell cycle timing, but not required for nuclear envelope and kinetochore localization region. Over residues Ala-1716–Val-1735 the composition is skewed to polar residues. Positions Lys-1746 to Glu-1758 form a DNA-binding region, a.T hook 2.

As to expression, ubiquitously expressed (at protein level).

The protein resides in the nucleus. It localises to the nucleoplasm. It is found in the nucleus envelope. The protein localises to the nucleus inner membrane. Its subcellular location is the nuclear pore complex. The protein resides in the chromosome. It localises to the centromere. It is found in the kinetochore. In terms of biological role, nuclear envelope protein which has essential roles in assembly of nuclear pore complexes and in chromatin maintenance during the cell cycle. Appears to be a stable structural component of the nuclear envelope during interphase. In dividing cells, localizes to kinetochores during early stages of mitosis and then to chromatin during late mitosis. Important for several mitotic processes including chromosome condensation, kinetochore assembly, chromosome segregation and cell-cycle timing. In postmitotic cells, plays a role in the early steps of nuclear pore complex assembly by recruiting the nucleoporins npp-10 and npp-5 to chromatin. Also involved in meiotic chromosome segregation. May function downstream of the Ran GTPase signaling pathway. The sequence is that of Protein mel-28 from Caenorhabditis elegans.